Reading from the N-terminus, the 668-residue chain is Potassium-transporting ATPase ATP-binding subunit (668 aa).

4 helical membrane-spanning segments follow: residues 31–51, 62–82, 213–233, and 243–263; these read MFLTEVSLFVSIFIYIFPSFF, FYVAVVVLLFLTVFFSSISTA, TVFLSGLTLIFLVITASIFAI, and IVMLIVLLIALIPTTIGALLP. The 4-aspartylphosphate intermediate role is filled by Asp-298. ATP-binding positions include Asp-335, Glu-339, 367–374, and Lys-385; that span reads FSSETKFS. Asp-504 and Asp-508 together coordinate Mg(2+). A run of 3 helical transmembrane segments spans residues 573–593, 599–619, and 644–664; these read YFVIIPAIFYMFPSLSLVNIL, IVAVTSALIFNTIIIVFLIPL, and IGGVITPFIAIKLIYMLLIAW.

The protein belongs to the cation transport ATPase (P-type) (TC 3.A.3) family. Type IA subfamily. As to quaternary structure, the system is composed of three essential subunits: KdpA, KdpB and KdpC.

It is found in the cell membrane. The enzyme catalyses K(+)(out) + ATP + H2O = K(+)(in) + ADP + phosphate + H(+). Its function is as follows. Part of the high-affinity ATP-driven potassium transport (or Kdp) system, which catalyzes the hydrolysis of ATP coupled with the electrogenic transport of potassium into the cytoplasm. This subunit is responsible for energy coupling to the transport system and for the release of the potassium ions to the cytoplasm. The protein is Potassium-transporting ATPase ATP-binding subunit of Thermoplasma volcanium (strain ATCC 51530 / DSM 4299 / JCM 9571 / NBRC 15438 / GSS1).